A 138-amino-acid polypeptide reads, in one-letter code: MLSPKKVKYRKKQRGRLSGEAQKGNKISFGEYGLVSLETNFITARQIEAARIAMTRKIKRGGRVWIRIFPDIPYTKKPAETRMGKGKGGVDHWNAPVKLGTVMFEMAGVVEELAQEAMSLASSKLPVKTMFVVRRDLR.

Positions 1–15 (MLSPKKVKYRKKQRG) are enriched in basic residues. Residues 1–21 (MLSPKKVKYRKKQRGRLSGEA) are disordered.

Belongs to the universal ribosomal protein uL16 family. In terms of assembly, part of the 50S ribosomal subunit.

Binds 23S rRNA and is also seen to make contacts with the A and possibly P site tRNAs. The chain is Large ribosomal subunit protein uL16 from Borreliella afzelii (strain PKo) (Borrelia afzelii).